The sequence spans 202 residues: MAHQCNDSSHSHGVDDGIEYSLNRYLDTGTITCLNEKVKGSVRHIFKSWEDRHDLKHFVESCDDEELIINIPFGAVTQIKSIIIIGGDGGSSPNKMKAYINNSNIDFGNINSFACTQEWNLHEDFEGQIGYSTKPTKFNNINHLTLYFPSNFGSPTTKIYFIALKGVYTSAKREIVNTVYESKPQLQDHKSDIFNGVSHDLS.

A PITH domain is found at 11–184; it reads SHGVDDGIEY…IVNTVYESKP (174 aa).

Belongs to the PITHD1 family.

The protein is PITH domain-containing protein 1 of Dictyostelium discoideum (Social amoeba).